We begin with the raw amino-acid sequence, 153 residues long: Large ribosomal subunit protein uL22 (153 aa).

Belongs to the universal ribosomal protein uL22 family. In terms of assembly, part of the 50S ribosomal subunit.

In terms of biological role, this protein binds specifically to 23S rRNA. It makes multiple contacts with different domains of the 23S rRNA in the assembled 50S subunit and ribosome. The globular domain of the protein is located near the polypeptide exit tunnel on the outside of the subunit, while an extended beta-hairpin is found that lines the wall of the exit tunnel in the center of the 70S ribosome. In Methanococcus maripaludis (strain C5 / ATCC BAA-1333), this protein is Large ribosomal subunit protein uL22.